Here is a 458-residue protein sequence, read N- to C-terminus: Light-independent protochlorophyllide reductase subunit N (458 aa).

[4Fe-4S] cluster is bound by residues C20, C45, and C105.

It belongs to the BchN/ChlN family. Protochlorophyllide reductase is composed of three subunits; ChlL, ChlN and ChlB. Forms a heterotetramer of two ChlB and two ChlN subunits. The cofactor is [4Fe-4S] cluster.

It localises to the plastid. Its subcellular location is the chloroplast. The catalysed reaction is chlorophyllide a + oxidized 2[4Fe-4S]-[ferredoxin] + 2 ADP + 2 phosphate = protochlorophyllide a + reduced 2[4Fe-4S]-[ferredoxin] + 2 ATP + 2 H2O. It participates in porphyrin-containing compound metabolism; chlorophyll biosynthesis (light-independent). Functionally, component of the dark-operative protochlorophyllide reductase (DPOR) that uses Mg-ATP and reduced ferredoxin to reduce ring D of protochlorophyllide (Pchlide) to form chlorophyllide a (Chlide). This reaction is light-independent. The NB-protein (ChlN-ChlB) is the catalytic component of the complex. This is Light-independent protochlorophyllide reductase subunit N from Angiopteris evecta (Mule's foot fern).